Reading from the N-terminus, the 268-residue chain is Energy-coupling factor transporter transmembrane protein EcfT (268 aa).

6 helical membrane passes run 26-46 (ILAVLFYMVMVFLANSPLSYG), 47-67 (ILIGFIVLGAALAKLPAGLLL), 73-93 (LWIIILLTMVIHFVTDPGEAL), 116-136 (LVLLLLVSSLMTFTTSPIVLT), 151-171 (VPAHELAMMMTIALRFIPTLL), and 246-266 (ALTGLVMLALFVLLAFLRWGI).

This sequence belongs to the energy-coupling factor EcfT family. Forms a stable energy-coupling factor (ECF) transporter complex composed of 2 membrane-embedded substrate-binding proteins (S component), 2 ATP-binding proteins (A component) and 2 transmembrane proteins (T component). May be able to interact with more than 1 S component at a time.

The protein localises to the cell membrane. Its function is as follows. Transmembrane (T) component of an energy-coupling factor (ECF) ABC-transporter complex. Unlike classic ABC transporters this ECF transporter provides the energy necessary to transport a number of different substrates. This chain is Energy-coupling factor transporter transmembrane protein EcfT, found in Acidaminococcus fermentans (strain ATCC 25085 / DSM 20731 / CCUG 9996 / CIP 106432 / VR4).